We begin with the raw amino-acid sequence, 356 residues long: UDP-N-acetylglucosamine--N-acetylmuramyl-(pentapeptide) pyrophosphoryl-undecaprenol N-acetylglucosamine transferase (356 aa).

Residues 12 to 14 (TGG), N124, R163, S188, I242, 261 to 266 (ALTVCE), and Q287 contribute to the UDP-N-acetyl-alpha-D-glucosamine site.

The protein belongs to the glycosyltransferase 28 family. MurG subfamily.

It localises to the cell inner membrane. It carries out the reaction di-trans,octa-cis-undecaprenyl diphospho-N-acetyl-alpha-D-muramoyl-L-alanyl-D-glutamyl-meso-2,6-diaminopimeloyl-D-alanyl-D-alanine + UDP-N-acetyl-alpha-D-glucosamine = di-trans,octa-cis-undecaprenyl diphospho-[N-acetyl-alpha-D-glucosaminyl-(1-&gt;4)]-N-acetyl-alpha-D-muramoyl-L-alanyl-D-glutamyl-meso-2,6-diaminopimeloyl-D-alanyl-D-alanine + UDP + H(+). It participates in cell wall biogenesis; peptidoglycan biosynthesis. Functionally, cell wall formation. Catalyzes the transfer of a GlcNAc subunit on undecaprenyl-pyrophosphoryl-MurNAc-pentapeptide (lipid intermediate I) to form undecaprenyl-pyrophosphoryl-MurNAc-(pentapeptide)GlcNAc (lipid intermediate II). The protein is UDP-N-acetylglucosamine--N-acetylmuramyl-(pentapeptide) pyrophosphoryl-undecaprenol N-acetylglucosamine transferase of Stutzerimonas stutzeri (strain A1501) (Pseudomonas stutzeri).